The sequence spans 153 residues: 6,7-dimethyl-8-ribityllumazine synthase (153 aa).

5-amino-6-(D-ribitylamino)uracil-binding positions include Phe22, Ala56 to Glu58, and Thr80 to Ile82. (2S)-2-hydroxy-3-oxobutyl phosphate is bound at residue Ser85–Thr86. His88 functions as the Proton donor in the catalytic mechanism. Phe113 lines the 5-amino-6-(D-ribitylamino)uracil pocket. Arg127 is a binding site for (2S)-2-hydroxy-3-oxobutyl phosphate.

The protein belongs to the DMRL synthase family. In terms of assembly, forms an icosahedral capsid composed of 60 subunits, arranged as a dodecamer of pentamers.

It catalyses the reaction (2S)-2-hydroxy-3-oxobutyl phosphate + 5-amino-6-(D-ribitylamino)uracil = 6,7-dimethyl-8-(1-D-ribityl)lumazine + phosphate + 2 H2O + H(+). The protein operates within cofactor biosynthesis; riboflavin biosynthesis; riboflavin from 2-hydroxy-3-oxobutyl phosphate and 5-amino-6-(D-ribitylamino)uracil: step 1/2. Functionally, catalyzes the formation of 6,7-dimethyl-8-ribityllumazine by condensation of 5-amino-6-(D-ribitylamino)uracil with 3,4-dihydroxy-2-butanone 4-phosphate. This is the penultimate step in the biosynthesis of riboflavin. This is 6,7-dimethyl-8-ribityllumazine synthase from Glaesserella parasuis serovar 5 (strain SH0165) (Haemophilus parasuis).